Here is a 626-residue protein sequence, read N- to C-terminus: Janus kinase and microtubule-interacting protein 1 (626 aa).

Residues 1–25 are disordered; it reads MSKKGRSKGEKPETETDSVQMANEE. A mediates association with microtubules region spans residues 1 to 365; the sequence is MSKKGRSKGE…KLKSLTRENV (365 aa). Coiled-coil stretches lie at residues 13–255 and 284–413; these read ETET…EAER and ERDV…DDLS. The tract at residues 365-626 is mediates interaction with TYK2 and GABBR1; that stretch reads VEMKEKLSAQ…ILFEPKLKFV (262 aa). A Phosphoserine modification is found at S382. The span at 452-461 shows a compositional bias: polar residues; it reads ETLSETSYNT. The interval 452–481 is disordered; it reads ETLSETSYNTDRTDRTPATPEEDLDETTTR. T470 bears the Phosphothreonine mark. A coiled-coil region spans residues 490 to 604; sequence QLTREYQALQ…EFRVLELEVR (115 aa).

The protein belongs to the JAKMIP family. As to quaternary structure, homodimer. Interacts with JAK1 and TYK2. Forms a complex with GABBR1 and KIF5B/kinesin-1. In terms of processing, phosphorylated. Specifically expressed in brain and testis by spermatogonia, spermatocytes, spermatozoa and Sertoli cells (at protein level).

Its subcellular location is the cytoplasm. The protein resides in the cytoskeleton. It localises to the membrane. Functionally, associates with microtubules and may play a role in the microtubule-dependent transport of the GABA-B receptor. May play a role in JAK1 signaling and regulate microtubule cytoskeleton rearrangements. This Rattus norvegicus (Rat) protein is Janus kinase and microtubule-interacting protein 1 (Jakmip1).